We begin with the raw amino-acid sequence, 405 residues long: MEPGAGGRNTARAQRAGSPNTPPPREQERKLEQEKLSGVVKSVHRRLRKKYREVGDFDKIWREHCEDEETLCEYAVAMKNLADNHWAKTCEGEGRIEWCCSVCREYFQNGGKRKALEKDEKRAVLATKTTPALNMHESSQLEGHLTNLSFTNPEFITELLQASGKIRLLDVGSCFNPFLKFEEFLTVGIDIVPAVESVYKCDFLNLQLQQPLQLAQDAIDAFLKQLKNPIDSLPGELFHVVVFSLLLSYFPSPYQRWICCKKAHELLVLNGLLLIITPDSSHQNRHAMMMKSWKIAIESLGFKRFKYSKFSHMHLMAFRKISLKTTSDLVSRNYPGMLYIPQDFNSIEDEEYSNPSCYVRSDIEDEQLAYGFTELPDAPYDSDSGESQASSIPFYELEDPILLLS.

A disordered region spans residues 1–34; sequence MEPGAGGRNTARAQRAGSPNTPPPREQERKLEQE. Residues 25-34 are compositionally biased toward basic and acidic residues; that stretch reads REQERKLEQE. Residues Arg-95, Gly-172, Asp-190, Asp-202, Phe-203, and Ser-244 each contribute to the S-adenosyl-L-methionine site.

It belongs to the BMT2/SAMTOR family. Interacts with the DEPDC5 subunit of the GATOR1 complex; interaction is disrupted when SAMTOR binds S-adenosyl-L-methionine. Interacts with the KICSTOR complex; interaction is disrupted when SAMTOR binds S-adenosyl-L-methionine.

S-adenosyl-L-methionine-binding protein that acts as an inhibitor of mTORC1 signaling via interaction with the GATOR1 and KICSTOR complexes. Acts as a sensor of S-adenosyl-L-methionine to signal methionine sufficiency to mTORC1: in presence of methionine, binds S-adenosyl-L-methionine, leading to disrupt interaction with the GATOR1 and KICSTOR complexes and promote mTORC1 signaling. Upon methionine starvation, S-adenosyl-L-methionine levels are reduced, thereby promoting the association with GATOR1 and KICSTOR, leading to inhibit mTORC1 signaling. Probably also acts as a S-adenosyl-L-methionine-dependent methyltransferase (Potential). The protein is S-adenosylmethionine sensor upstream of mTORC1 of Homo sapiens (Human).